The chain runs to 553 residues: Protein Early 65 kDa (553 aa).

The protein localises to the host cytoplasm. May participate in the recruitment of G-actin to the host nucleus. In Autographa californica nuclear polyhedrosis virus (AcMNPV), this protein is Protein Early 65 kDa (HE65).